Reading from the N-terminus, the 709-residue chain is Phosphoribosylformylglycinamidine synthase subunit PurL (709 aa).

The active site involves H36. The ATP site is built by Y39 and K80. E82 is a Mg(2+) binding site. Substrate contacts are provided by residues 83-86 (SHNH) and R105. Residue H84 is the Proton acceptor of the active site. D106 contributes to the Mg(2+) binding site. Residue Q226 participates in substrate binding. Mg(2+) is bound at residue D252. 294–296 (ETQ) is a binding site for substrate. Residues D470 and G507 each contribute to the ATP site. S510 contributes to the substrate binding site.

Belongs to the FGAMS family. As to quaternary structure, monomer. Part of the FGAM synthase complex composed of 1 PurL, 1 PurQ and 2 PurS subunits.

The protein localises to the cytoplasm. The catalysed reaction is N(2)-formyl-N(1)-(5-phospho-beta-D-ribosyl)glycinamide + L-glutamine + ATP + H2O = 2-formamido-N(1)-(5-O-phospho-beta-D-ribosyl)acetamidine + L-glutamate + ADP + phosphate + H(+). It participates in purine metabolism; IMP biosynthesis via de novo pathway; 5-amino-1-(5-phospho-D-ribosyl)imidazole from N(2)-formyl-N(1)-(5-phospho-D-ribosyl)glycinamide: step 1/2. In terms of biological role, part of the phosphoribosylformylglycinamidine synthase complex involved in the purines biosynthetic pathway. Catalyzes the ATP-dependent conversion of formylglycinamide ribonucleotide (FGAR) and glutamine to yield formylglycinamidine ribonucleotide (FGAM) and glutamate. The FGAM synthase complex is composed of three subunits. PurQ produces an ammonia molecule by converting glutamine to glutamate. PurL transfers the ammonia molecule to FGAR to form FGAM in an ATP-dependent manner. PurS interacts with PurQ and PurL and is thought to assist in the transfer of the ammonia molecule from PurQ to PurL. In Saccharolobus islandicus (strain Y.N.15.51 / Yellowstone #2) (Sulfolobus islandicus), this protein is Phosphoribosylformylglycinamidine synthase subunit PurL.